A 173-amino-acid chain; its full sequence is MTYFMFLLLMALVVGLVAVASNPTPYFAALGLVVAAGVGCGVLVGHGGSFLSLVLFLIYLGGMLVVFAYSAALAAEPYPEAWGSRSVLGYVLVYLLGVGLVAGFFWGGWYEGSWVVVDGLKEFSVLRGDVSGVAVMYSSGGGMLVICAWVLLLTLLVVLELTRGLSRGALRAV.

A run of 5 helical transmembrane segments spans residues 1-21 (MTYF…AVAS), 25-45 (PYFA…VLVG), 53-73 (LVLF…SAAL), 87-107 (VLGY…FFWG), and 141-161 (GGML…VLEL).

This sequence belongs to the complex I subunit 6 family.

It localises to the mitochondrion membrane. It catalyses the reaction a ubiquinone + NADH + 5 H(+)(in) = a ubiquinol + NAD(+) + 4 H(+)(out). Functionally, core subunit of the mitochondrial membrane respiratory chain NADH dehydrogenase (Complex I) that is believed to belong to the minimal assembly required for catalysis. Complex I functions in the transfer of electrons from NADH to the respiratory chain. The immediate electron acceptor for the enzyme is believed to be ubiquinone. This chain is NADH-ubiquinone oxidoreductase chain 6 (MT-ND6), found in Carassius auratus (Goldfish).